A 407-amino-acid chain; its full sequence is Substance-P receptor (407 aa).

Residues 1–31 are Extracellular-facing; sequence MDNVLPMDSDLFPNISTNTSESNQFVQPTWQ. Residues Asn14 and Asn18 are each glycosylated (N-linked (GlcNAc...) asparagine). The chain crosses the membrane as a helical span at residues 32–54; that stretch reads IVLWAAAYTVIVVTSVVGNVVVI. Residues 55–64 are Cytoplasmic-facing; the sequence is WIILAHKRMR. The helical transmembrane segment at 65-86 threads the bilayer; sequence TVTNYFLVNLAFAEACMAAFNT. At 87–106 the chain is on the extracellular side; sequence VVNFTYAVHNVWYYGLFYCK. Cysteines 105 and 180 form a disulfide. The chain crosses the membrane as a helical span at residues 107 to 128; the sequence is FHNFFPIAALFASIYSMTAVAF. Residues 129–148 are Cytoplasmic-facing; the sequence is DRYMAIIHPLQPRLSATATK. A helical membrane pass occupies residues 149–169; the sequence is VVIFVIWVLALLLAFPQGYYS. Residues 170–194 lie on the Extracellular side of the membrane; the sequence is TTETMPSRVVCMIEWPEHPNRTYEK. A helical transmembrane segment spans residues 195-219; it reads AYHICVTVLIYFLPLLVIGYAYTVV. The Cytoplasmic segment spans residues 220–248; sequence GITLWASEIPGDSSDRYHEQVSAKRKVVK. The helical transmembrane segment at 249–270 threads the bilayer; the sequence is MMIVVVCTFAICWLPFHVFFLL. At 271–283 the chain is on the extracellular side; that stretch reads PYINPDLYLKKFI. A helical membrane pass occupies residues 284 to 308; that stretch reads QQVYLASMWLAMSSTMYNPIIYCCL. The Cytoplasmic segment spans residues 309 to 407; sequence NDRFRLGFKH…SSSFYSNMLA (99 aa). A lipid anchor (S-palmitoyl cysteine) is attached at Cys322. The segment at 362–407 is disordered; it reads VGAHEEEPEEGPKATPSSLDLTSNGSSRSNSKTMTESSSFYSNMLA. Polar residues predominate over residues 376–407; that stretch reads TPSSLDLTSNGSSRSNSKTMTESSSFYSNMLA.

Belongs to the G-protein coupled receptor 1 family. Interacts with ARRB1.

It localises to the cell membrane. Functionally, this is a receptor for the tachykinin neuropeptide substance P. It is probably associated with G proteins that activate a phosphatidylinositol-calcium second messenger system. The rank order of affinity of this receptor to tachykinins is: substance P &gt; substance K &gt; neuromedin-K. This chain is Substance-P receptor (Tacr1), found in Rattus norvegicus (Rat).